The primary structure comprises 80 residues: Serine palmitoyltransferase-regulating protein TSC3 (80 aa).

A helical membrane pass occupies residues 54–74; sequence FDSFFLHVFFLTIFSLSFFGI.

In terms of assembly, interacts with the serine palmitoyltransferase complex LCB1-LCB2. Component of the SPOTS complex, at least composed of LCB1/2 (LCB1 and/or LCB2), ORM1/2 (ORM1 and/or ORM2), SAC1 and TSC3.

The protein resides in the endoplasmic reticulum membrane. Its function is as follows. Stimulates the activity of serine palmitoyltransferase (SPT), and thus plays a role in the biosynthesis of sphingolipids. This Saccharomyces cerevisiae (strain ATCC 204508 / S288c) (Baker's yeast) protein is Serine palmitoyltransferase-regulating protein TSC3 (TSC3).